A 534-amino-acid chain; its full sequence is Light-independent protochlorophyllide reductase subunit B (534 aa).

Asp36 provides a ligand contact to [4Fe-4S] cluster. Asp274 serves as the catalytic Proton donor. Position 409 to 410 (409 to 410 (GL)) interacts with substrate. The interval 426–446 (DEAGPSHHGGKAVPASAPRAD) is disordered.

It belongs to the ChlB/BchB/BchZ family. Protochlorophyllide reductase is composed of three subunits; BchL, BchN and BchB. Forms a heterotetramer of two BchB and two BchN subunits. It depends on [4Fe-4S] cluster as a cofactor.

It catalyses the reaction chlorophyllide a + oxidized 2[4Fe-4S]-[ferredoxin] + 2 ADP + 2 phosphate = protochlorophyllide a + reduced 2[4Fe-4S]-[ferredoxin] + 2 ATP + 2 H2O. It participates in porphyrin-containing compound metabolism; bacteriochlorophyll biosynthesis (light-independent). In terms of biological role, component of the dark-operative protochlorophyllide reductase (DPOR) that uses Mg-ATP and reduced ferredoxin to reduce ring D of protochlorophyllide (Pchlide) to form chlorophyllide a (Chlide). This reaction is light-independent. The NB-protein (BchN-BchB) is the catalytic component of the complex. The sequence is that of Light-independent protochlorophyllide reductase subunit B from Cereibacter sphaeroides (strain ATCC 17029 / ATH 2.4.9) (Rhodobacter sphaeroides).